The chain runs to 243 residues: MSDMAMIRIGILIAGLLLVAAIFLFGRPKKSPQGRRVDKGEGQPRERREPVISSEFGAEGDAAERAEGVEQSELNLEGQDASGGNEVGKRPNQDFDKIVSLFVAAKAGQVLRGEDVVVVAEKTGLVFGHMNVFHRLVEGHPERGPIFSMASILKPGSFDMANIREMQTPAIAFFLTLPAPMTALDAWEKMLPTVQRMAELLDGVVLDDSRNALGRQRVAHIRDELRAYDRQHQAPPLTKSPRW.

The Periplasmic segment spans residues 1-4; it reads MSDM. The chain crosses the membrane as a helical span at residues 5–25; it reads AMIRIGILIAGLLLVAAIFLF. At 26-243 the chain is on the cytoplasmic side; that stretch reads GRPKKSPQGR…APPLTKSPRW (218 aa). The tract at residues 30–89 is disordered; sequence KSPQGRRVDKGEGQPRERREPVISSEFGAEGDAAERAEGVEQSELNLEGQDASGGNEVGK. A compositionally biased stretch (basic and acidic residues) spans 35–50; sequence RRVDKGEGQPRERREP.

This sequence belongs to the ZipA family. In terms of assembly, interacts with FtsZ via their C-terminal domains.

The protein localises to the cell inner membrane. Its function is as follows. Essential cell division protein that stabilizes the FtsZ protofilaments by cross-linking them and that serves as a cytoplasmic membrane anchor for the Z ring. Also required for the recruitment to the septal ring of downstream cell division proteins. This chain is Cell division protein ZipA, found in Xanthomonas axonopodis pv. citri (strain 306).